Reading from the N-terminus, the 271-residue chain is Ribonuclease HII (271 aa).

The region spanning 84–271 is the RNase H type-2 domain; sequence VLIAGVDEVG…HRMSFLSNYI (188 aa). A divalent metal cation-binding residues include D90, E91, and D187.

It belongs to the RNase HII family. Mn(2+) is required as a cofactor. The cofactor is Mg(2+).

It is found in the cytoplasm. The enzyme catalyses Endonucleolytic cleavage to 5'-phosphomonoester.. Endonuclease that specifically degrades the RNA of RNA-DNA hybrids. This Clostridium tetani (strain Massachusetts / E88) protein is Ribonuclease HII.